Here is a 559-residue protein sequence, read N- to C-terminus: Cation/calcium exchanger 2 (559 aa).

13 helical membrane-spanning segments follow: residues 10-30 (FGYL…GFFT), 86-106 (GFPI…FYLL), 131-151 (VAGV…ASLV), 167-187 (TVVG…SISL), 203-223 (ICFF…GKIN), 224-244 (FWGA…VVLS), 331-351 (WSKP…SFLW), 362-382 (AGVV…IAGA), 393-413 (WLLP…YISA), 416-436 (LVAL…ILGL), 480-500 (FALG…SIVI), 506-526 (LLES…VLFS), and 531-551 (LGGV…SLRI).

This sequence belongs to the Ca(2+):cation antiporter (CaCA) (TC 2.A.19) family. Cation/calcium exchanger (CCX) subfamily.

The protein resides in the membrane. Membrane-localized H(+)-dependent K(+) and Na(+) transporter. This chain is Cation/calcium exchanger 2 (CCX2), found in Arabidopsis thaliana (Mouse-ear cress).